Here is a 454-residue protein sequence, read N- to C-terminus: Mitochondrial dynamics protein MID49 (454 aa).

Residues Met1–Asp22 are Mitochondrial intermembrane-facing. A helical membrane pass occupies residues Phe23–Ala43. Over Thr44 to Phe454 the chain is Cytoplasmic. The tract at residues Ala76–Thr113 is disordered.

This sequence belongs to the MID49/MID51 family. As to quaternary structure, interacts with DNM1L.

Its subcellular location is the mitochondrion outer membrane. Its function is as follows. Mitochondrial outer membrane protein which regulates mitochondrial organization. It is required for mitochondrial fission and promotes the recruitment and association of the fission mediator dynamin-related protein 1 (DNM1L) to the mitochondrial surface independently of the mitochondrial fission FIS1 and MFF proteins. Regulates DNM1L GTPase activity. The sequence is that of Mitochondrial dynamics protein MID49 (Mief2) from Mus musculus (Mouse).